The primary structure comprises 142 residues: Large ribosomal subunit protein uL11 (142 aa).

Belongs to the universal ribosomal protein uL11 family. In terms of assembly, part of the ribosomal stalk of the 50S ribosomal subunit. Interacts with L10 and the large rRNA to form the base of the stalk. L10 forms an elongated spine to which L12 dimers bind in a sequential fashion forming a multimeric L10(L12)X complex. One or more lysine residues are methylated.

Functionally, forms part of the ribosomal stalk which helps the ribosome interact with GTP-bound translation factors. This Yersinia pseudotuberculosis serotype O:1b (strain IP 31758) protein is Large ribosomal subunit protein uL11.